Here is a 316-residue protein sequence, read N- to C-terminus: MAPTLARPSLSGVQFILSSPTTTCAATSVVTRAIAARSFSTTRSARDSVSIPPDSPNYIKVPEPPQSSEVRHPFVKGHLPIPRSIFPKKGVPEKVQSGYVNRIAPKSAAELAGLPPKSKQESWRRKMAEARRQSLEAGLQGLWQRKVKRDQKQAKESKARYLANKRAAQAPERLDEVFTRATIRESTAKNTFVPLDPEAFVKAEEARIKHAEKEAMKSEARRDAVVQLYVASKNFIVDEKELEEHVNKHFTEKIHNAGLWESGRSIWDSQKNPISMRELRNEFSGFNDRVTATTSAAVKTTVRQKNVAEELTGGKL.

Positions 41-71 (TTRSARDSVSIPPDSPNYIKVPEPPQSSEVR) are disordered.

Belongs to the mitochondrion-specific ribosomal protein mS26 family. In terms of assembly, component of the mitochondrial small ribosomal subunit (mt-SSU). Mature N.crassa 74S mitochondrial ribosomes consist of a small (37S) and a large (54S) subunit. The 37S small subunit contains a 16S ribosomal RNA (16S mt-rRNA) and 32 different proteins. The 54S large subunit contains a 23S rRNA (23S mt-rRNA) and 42 different proteins.

It localises to the mitochondrion. Component of the mitochondrial ribosome (mitoribosome), a dedicated translation machinery responsible for the synthesis of mitochondrial genome-encoded proteins, including at least some of the essential transmembrane subunits of the mitochondrial respiratory chain. The mitoribosomes are attached to the mitochondrial inner membrane and translation products are cotranslationally integrated into the membrane. This Neurospora crassa (strain ATCC 24698 / 74-OR23-1A / CBS 708.71 / DSM 1257 / FGSC 987) protein is Small ribosomal subunit protein mS26 (pet123).